The sequence spans 65 residues: Large ribosomal subunit protein bL28 (65 aa).

Positions 1–26 (MARRDDLTNKGPMSGNKRSHALNATK) are disordered. Residues 17 to 26 (KRSHALNATK) are compositionally biased toward basic residues.

Belongs to the bacterial ribosomal protein bL28 family.

In Mycoplasma mobile (strain ATCC 43663 / 163K / NCTC 11711) (Mesomycoplasma mobile), this protein is Large ribosomal subunit protein bL28.